The primary structure comprises 221 residues: MEKRMKLRVSRIVRSSLSSCRPRDLYDVVETCAVTSKATSSERFFVTKAKTKTPSRPKSHASSCPRASPIFPPNPFYEESRSFRDLRKKVKTNRKQRSQFGSDPLFASRFKSTGSWYWSCSEEEDEGDKEESEDDDSDTLFSSRSFSSDSSKAESFAVVKKSKDPYEDFRTSMVEMIVERQIFAPAELQQLLQCFLSLNSRQHHKVIVQVFLEIYATLFSP.

Residues 124–138 (EDEGDKEESEDDDSD) are compositionally biased toward acidic residues. Positions 124-147 (EDEGDKEESEDDDSDTLFSSRSFS) are disordered. The OVATE domain maps to 158 to 217 (VVKKSKDPYEDFRTSMVEMIVERQIFAPAELQQLLQCFLSLNSRQHHKVIVQVFLEIYAT).

In terms of tissue distribution, expressed in roots, rosette and cauline leaves, shoots, stems, flower buds and siliques.

Its subcellular location is the nucleus. In terms of biological role, transcriptional repressor that regulates multiple aspects of plant growth and development through the regulation of BEL1-LIKE (BLH) and KNOX TALE (KNAT) homeodomain transcription factors. The protein is Transcription repressor OFP8 (OFP8) of Arabidopsis thaliana (Mouse-ear cress).